The chain runs to 663 residues: Probable methylenetetrahydrofolate reductase (NADPH) (663 aa).

The Proton donor/acceptor role is filled by Glu-76. Residues 76 to 81 (EFFPPR) and 107 to 108 (TW) contribute to the NAD(+) site. Thr-107 is subject to Phosphothreonine. Residues 107–108 (TW), His-141, 171–173 (RGD), 187–188 (RA), Tyr-210, 214–217 (HPQA), Asp-223, and Lys-230 each bind FAD. Asp-173 lines the substrate pocket. Residues Gln-241, Tyr-334, and Arg-338 each coordinate substrate. Phosphoserine is present on Ser-408. Thr-465 is subject to Phosphothreonine. S-adenosyl-L-methionine-binding positions include 477–480 (QPET), 497–501 (TVNSQ), Thr-578, and Thr-591.

The protein belongs to the methylenetetrahydrofolate reductase family. It depends on FAD as a cofactor.

It carries out the reaction (6S)-5-methyl-5,6,7,8-tetrahydrofolate + NADP(+) = (6R)-5,10-methylene-5,6,7,8-tetrahydrofolate + NADPH + H(+). It participates in one-carbon metabolism; tetrahydrofolate interconversion. In Caenorhabditis elegans, this protein is Probable methylenetetrahydrofolate reductase (NADPH).